The primary structure comprises 666 residues: Vicilin-like antimicrobial peptides 2-2 (666 aa).

Residues 1–27 (MAINTSNLCSLLFLLSLFLLSTTVSLA) form the signal peptide. Disordered regions lie at residues 161 to 191 (QQKRYEEQQREDEEKYEERMKEEDNKRDPQQ) and 221 to 251 (RQHGRGGDLINPQRGGSGRYEEGEEKQSDNP). The segment covering 239-251 (RYEEGEEKQSDNP) has biased composition (basic and acidic residues). Cupin type-1 domains follow at residues 271-410 (SVLE…ERLR) and 455-625 (YNLF…KEVE).

The protein belongs to the 7S seed storage protein family.

It is found in the secreted. Its function is as follows. Antimicrobial peptides 2b, 2c and 2d have antibacterial and antifungal activity against a range of species. This chain is Vicilin-like antimicrobial peptides 2-2, found in Macadamia integrifolia (Macadamia nut).